Here is a 488-residue protein sequence, read N- to C-terminus: Coagulation factor X (488 aa).

The first 31 residues, 1–31 (MGRPLHLVLLSASLAGLLLLGESLFIRREQA), serve as a signal peptide directing secretion. Residues 32-40 (NNILARVTR) constitute a propeptide that is removed on maturation. One can recognise a Gla domain in the interval 41–85 (ANSFLEEMKKGHLERECMEETCSYEEAREVFEDSDKTNEFWNKYK). E46, E47, E54, E56, E59, E60, E65, E66, E69, E72, and E79 each carry 4-carboxyglutamate. An intrachain disulfide couples C57 to C62. The EGF-like 1; calcium-binding domain occupies 86–122 (DGDQCETSPCQNQGKCKDGLGEYTCTCLEGFEGKNCE). 11 cysteine pairs are disulfide-bonded: C90/C101, C95/C110, C112/C121, C129/C140, C136/C149, C151/C164, C172/C342, C241/C246, C261/C277, C390/C404, and C415/C443. D103 is subject to (3R)-3-hydroxyaspartate. In terms of domain architecture, EGF-like 2 spans 125-165 (TRKLCSLDNGDCDQFCHEEQNSVVCSCARGYTLADNGKACI). An O-glycosylated at one site region spans residues 183–203 (SVAQATSSSGEAPDSITWKPY). A propeptide spans 183 to 234 (SVAQATSSSGEAPDSITWKPYDAADLDPTENPFDLLDFNQTQPERGDNNLTR) (activation peptide). 2 O-linked (GalNAc...) threonine glycosylation sites follow: T199 and T211. 2 N-linked (GlcNAc...) asparagine glycosylation sites follow: N221 and N231. Residues 235-467 (IVGGQECKDG…FLKWIDRSMK (233 aa)) form the Peptidase S1 domain. Active-site charge relay system residues include H276 and D322. Catalysis depends on S419, which acts as the Charge relay system. The interval 476–485 (SHAPEVITSS) is O-glycosylated at one site.

Belongs to the peptidase S1 family. In terms of assembly, the two chains are formed from a single-chain precursor by the excision of two Arg residues and are held together by 1 or more disulfide bonds. Forms a heterodimer with SERPINA5. Interacts (inactive and activated) with ixolaris, an anticoagulant protein from Ixodes scapularis saliva. Interacts (activated) with iripin-8, a serine protease inhibitor from Ixodes ricinus saliva. Interacts (activated) with FXa-directed anticoagulant from Aedes albopictus saliva. Interacts (activated) with guianensin, an anticoagulant protein from Simulium guianense saliva. Interacts (activated) with simukunin, an anticoagulant protein from Simulium vittatum saliva. Post-translationally, the vitamin K-dependent, enzymatic carboxylation of some glutamate residues allows the modified protein to bind calcium. In terms of processing, N- and O-glycosylated. O-glycosylated with core 1 or possibly core 8 glycans. Proteolytically cleaved and activated by cathepsin CTSG. The activation peptide is cleaved by factor IXa (in the intrinsic pathway), or by factor VIIa (in the extrinsic pathway). Post-translationally, the iron and 2-oxoglutarate dependent 3-hydroxylation of aspartate and asparagine is (R) stereospecific within EGF domains. In terms of tissue distribution, plasma; synthesized in the liver.

The protein resides in the secreted. The catalysed reaction is Selective cleavage of Arg-|-Thr and then Arg-|-Ile bonds in prothrombin to form thrombin.. Inhibited by SERPINA5 and SERPINA10. Factor Xa is a vitamin K-dependent glycoprotein that converts prothrombin to thrombin in the presence of factor Va, calcium and phospholipid during blood clotting. Factor Xa activates pro-inflammatory signaling pathways in a protease-activated receptor (PAR)-dependent manner. Up-regulates expression of protease-activated receptors (PARs) F2R, F2RL1 and F2RL2 in dermal microvascular endothelial cells. Triggers the production of pro-inflammatory cytokines, such as MCP-1/CCL2 and IL6, in cardiac fibroblasts and umbilical vein endothelial cells in PAR-1/F2R-dependent manner. Triggers the production of pro-inflammatory cytokines, such as MCP-1/CCL2, IL6, TNF-alpha/TNF, IL-1beta/IL1B, IL8/CXCL8 and IL18, in endothelial cells and atrial tissues. Induces expression of adhesion molecules, such as ICAM1, VCAM1 and SELE, in endothelial cells and atrial tissues. Increases expression of phosphorylated ERK1/2 in dermal microvascular endothelial cells and atrial tissues. Triggers activation of the transcription factor NF-kappa-B in dermal microvascular endothelial cells and atrial tissues. Activates pro-inflammatory and pro-fibrotic responses in dermal fibroblasts and enhances wound healing probably via PAR-2/F2RL1-dependent mechanism. Activates barrier protective signaling responses in endothelial cells in PAR-2/F2RL1-dependent manner; the activity depends on the cleavage of PAR-2/F2RL1 by factor Xa. Up-regulates expression of plasminogen activator inhibitor 1 (SERPINE1) in atrial tissues. The chain is Coagulation factor X (F10) from Homo sapiens (Human).